Here is an 82-residue protein sequence, read N- to C-terminus: Kappa-actitoxin-Avd4j (82 aa).

Residues 1 to 19 (MNKALFLCLVVLCAAVVFA) form the signal peptide. Residues 20-31 (AEDLQKAKHAPF) constitute a propeptide that is removed on maturation. 3 disulfide bridges follow: Cys38/Cys73, Cys40/Cys66, and Cys56/Cys74.

It belongs to the sea anemone type 3 (BDS) potassium channel toxin family. Weakly expressed in the ectodermal tissue from the distal and proximal tentacles, body wall, and oral disk.

It localises to the secreted. The protein resides in the nematocyst. Its function is as follows. Blocks Kv3 voltage-gated potassium channels. Reduces blood pressure. The chain is Kappa-actitoxin-Avd4j from Anemonia viridis (Snakelocks anemone).